The primary structure comprises 186 residues: Elongation factor P (186 aa).

The protein belongs to the elongation factor P family.

The protein localises to the cytoplasm. It participates in protein biosynthesis; polypeptide chain elongation. Functionally, involved in peptide bond synthesis. Stimulates efficient translation and peptide-bond synthesis on native or reconstituted 70S ribosomes in vitro. Probably functions indirectly by altering the affinity of the ribosome for aminoacyl-tRNA, thus increasing their reactivity as acceptors for peptidyl transferase. In Elusimicrobium minutum (strain Pei191), this protein is Elongation factor P.